The chain runs to 260 residues: Indole-3-glycerol phosphate synthase (260 aa).

This sequence belongs to the TrpC family.

The catalysed reaction is 1-(2-carboxyphenylamino)-1-deoxy-D-ribulose 5-phosphate + H(+) = (1S,2R)-1-C-(indol-3-yl)glycerol 3-phosphate + CO2 + H2O. Its pathway is amino-acid biosynthesis; L-tryptophan biosynthesis; L-tryptophan from chorismate: step 4/5. In Bacteroides thetaiotaomicron (strain ATCC 29148 / DSM 2079 / JCM 5827 / CCUG 10774 / NCTC 10582 / VPI-5482 / E50), this protein is Indole-3-glycerol phosphate synthase.